Here is a 398-residue protein sequence, read N- to C-terminus: Aspartic protease 3 (398 aa).

A signal peptide spans Met1–Ala17. A propeptide spans Ile18–Asp55 (removed in mature form). The 324-residue stretch at Tyr69–Ala392 folds into the Peptidase A1 domain. The active site involves Asp87. Cys100 and Cys107 form a disulfide bridge. Asp279 is a catalytic residue. Cys313 and Cys351 are oxidised to a cystine. The N-linked (GlcNAc...) asparagine glycan is linked to Asn321.

It belongs to the peptidase A1 family. Highly expressed in intestine and to a lower extent in body wall muscles, hypodermis and neurons.

It is found in the cytoplasm. Its subcellular location is the lysosome. The protein localises to the secreted. Aspartic protease. Part of the necrosis cell death pathway. Involved in neuronal cell degeneration. Involved in heat stress response. This chain is Aspartic protease 3, found in Caenorhabditis elegans.